Reading from the N-terminus, the 446-residue chain is DDB1- and CUL4-associated factor 12-A (446 aa).

Over residues 1–12 the composition is skewed to basic residues; that stretch reads MTRRSVSRKRRA. Positions 1 to 32 are disordered; that stretch reads MTRRSVSRKRRANPGSGPGEQSDWDHSAHKRK. WD repeat units lie at residues 132–173, 177–215, 245–284, and 333–370; these read SHQS…PVCV, GHND…VNKS, PVNC…SKLL, and EQGS…FLED.

It belongs to the WD repeat DCAF12 family. In terms of assembly, component of the DCX(DCAF12) E3 ubiquitin ligase complex, at least composed of cul4 (cul4a or cul4b), ddb1, dcaf12 and rbx1.

The protein localises to the cytoplasm. Its subcellular location is the cytoskeleton. The protein resides in the microtubule organizing center. It is found in the centrosome. It localises to the nucleus. It participates in protein modification; protein ubiquitination. Functionally, substrate-recognition component of a DCX (DDB1-CUL4-X-box) E3 ubiquitin-protein ligase complex of the DesCEND (destruction via C-end degrons) pathway, which recognizes a C-degron located at the extreme C terminus of target proteins, leading to their ubiquitination and degradation. The C-degron recognized by the DesCEND pathway is usually a motif of less than ten residues and can be present in full-length proteins, truncated proteins or proteolytically cleaved forms. The DCX(DCAF12) complex specifically recognizes proteins with a diglutamate (Glu-Glu) at the C-terminus leading to their ubiquitination and degradation. Also directly recognizes the C-terminal glutamate-leucine (Glu-Leu) degron as an alternative degron in proteins leading to their ubiquitination and degradation. The protein is DDB1- and CUL4-associated factor 12-A (dcaf12-a) of Xenopus laevis (African clawed frog).